A 712-amino-acid polypeptide reads, in one-letter code: Cadherin-13 (712 aa).

An N-terminal signal peptide occupies residues 1–22 (MQHKTQLTLSFLLSQVLLLACA). Residues 23–138 (EDLECTPGFQ…GNLGIPRQKR (116 aa)) constitute a propeptide that is removed on maturation. N86 is a glycosylation site (N-linked (GlcNAc...) asparagine). 5 Cadherin domains span residues 143–245 (TPIL…RPMF), 246–363 (KEGP…PPEF), 364–477 (TKKE…GPVF), 478–585 (HPNP…VPSL), and 586–680 (YPTL…LQVC). N-linked (GlcNAc...) asparagine glycosylation is found at N382, N500, N530, N638, and N671. D693 carries GPI-anchor amidated aspartate lipidation. A propeptide spans 694–712 (ALHISMTLILLSLFSLFCL) (removed in mature form).

In terms of assembly, by contrast to classical cadherins, homodimerization in trans is not mediated by cadherin EC1 domain strand-swapping, but instead through a homophilic adhesive interface which joins two elongated EC1-EC2 domains through a region near their Ca2+-binding sites to form a tetrahedral, X-like shape. As to expression, neural tissues. Also found in muscles; kidney and retina.

The protein resides in the cell membrane. It is found in the cytoplasm. Its function is as follows. Cadherins are calcium-dependent cell adhesion proteins. They preferentially interact with themselves in a homophilic manner in connecting cells; cadherins may thus contribute to the sorting of heterogeneous cell types. May act as a negative regulator of neural cell growth. This chain is Cadherin-13 (CDH13), found in Gallus gallus (Chicken).